Reading from the N-terminus, the 193-residue chain is Penicillin-binding protein activator LpoB (193 aa).

Positions 1 to 16 are cleaved as a signal peptide; the sequence is MKRYLSVALAALVLTG. Residue Cys17 is the site of N-palmitoyl cysteine attachment. A lipid anchor (S-diacylglycerol cysteine) is attached at Cys17. Positions 24–55 are disordered; the sequence is EPTTPPVTIEPVTPPVPETPPPVDNVPPPPKM. The segment covering 35 to 54 has biased composition (pro residues); it reads VTPPVPETPPPVDNVPPPPK.

This sequence belongs to the LpoB family. As to quaternary structure, interacts with PBP1b.

Its subcellular location is the cell outer membrane. In terms of biological role, regulator of peptidoglycan synthesis that is essential for the function of penicillin-binding protein 1B (PBP1b). The protein is Penicillin-binding protein activator LpoB of Yersinia enterocolitica serotype O:8 / biotype 1B (strain NCTC 13174 / 8081).